A 122-amino-acid polypeptide reads, in one-letter code: Large ribosomal subunit protein bL12 (122 aa).

The protein belongs to the bacterial ribosomal protein bL12 family. As to quaternary structure, homodimer. Part of the ribosomal stalk of the 50S ribosomal subunit. Forms a multimeric L10(L12)X complex, where L10 forms an elongated spine to which 2 to 4 L12 dimers bind in a sequential fashion. Binds GTP-bound translation factors.

In terms of biological role, forms part of the ribosomal stalk which helps the ribosome interact with GTP-bound translation factors. Is thus essential for accurate translation. The chain is Large ribosomal subunit protein bL12 from Stutzerimonas stutzeri (strain A1501) (Pseudomonas stutzeri).